The chain runs to 376 residues: MRKVNCIKVITRAHTLGYCGGVRMAVRMAEHARAHHRGSVYTLGPLVHNPVTLARLRARGIECLDPAHLSFALHAPAAPGAAPHAVEEKTARTVVIRAHGVAPEVYEALERSGAQVVDATCPRVKESQRRAQGFAAQGLHVILAGDRNHGEIVGIEGYVRAGAAQACSHLPGGAPDGMLPQVQCFVVQNAREAAALPCLARAALLAQTTITQGEYDAIAAAARTRVRELTVARTICAATARRQAALRALAPTVEALLVIGGAHSANTQRLLHTARETSLPTWLVERVEDIPPDIYAFSAVGISAGASTPDCVIAAVEQALRTGGAPVASRVSSSALPKVSTCRAVCAAATSSVGSAGASGAVSPGAVRPFAVGSVR.

A [4Fe-4S] cluster-binding site is contributed by C19. Residues H48 and H99 each contribute to the (2E)-4-hydroxy-3-methylbut-2-enyl diphosphate site. Dimethylallyl diphosphate-binding residues include H48 and H99. Isopentenyl diphosphate contacts are provided by H48 and H99. C121 is a binding site for [4Fe-4S] cluster. H149 is a binding site for (2E)-4-hydroxy-3-methylbut-2-enyl diphosphate. Residue H149 participates in dimethylallyl diphosphate binding. Isopentenyl diphosphate is bound at residue H149. E151 functions as the Proton donor in the catalytic mechanism. A (2E)-4-hydroxy-3-methylbut-2-enyl diphosphate-binding site is contributed by T208. C236 provides a ligand contact to [4Fe-4S] cluster. Residues S264, N266, and S307 each coordinate (2E)-4-hydroxy-3-methylbut-2-enyl diphosphate. Dimethylallyl diphosphate contacts are provided by S264, N266, and S307. S264, N266, and S307 together coordinate isopentenyl diphosphate.

It belongs to the IspH family. Requires [4Fe-4S] cluster as cofactor.

The catalysed reaction is isopentenyl diphosphate + 2 oxidized [2Fe-2S]-[ferredoxin] + H2O = (2E)-4-hydroxy-3-methylbut-2-enyl diphosphate + 2 reduced [2Fe-2S]-[ferredoxin] + 2 H(+). It carries out the reaction dimethylallyl diphosphate + 2 oxidized [2Fe-2S]-[ferredoxin] + H2O = (2E)-4-hydroxy-3-methylbut-2-enyl diphosphate + 2 reduced [2Fe-2S]-[ferredoxin] + 2 H(+). The protein operates within isoprenoid biosynthesis; dimethylallyl diphosphate biosynthesis; dimethylallyl diphosphate from (2E)-4-hydroxy-3-methylbutenyl diphosphate: step 1/1. It participates in isoprenoid biosynthesis; isopentenyl diphosphate biosynthesis via DXP pathway; isopentenyl diphosphate from 1-deoxy-D-xylulose 5-phosphate: step 6/6. Functionally, catalyzes the conversion of 1-hydroxy-2-methyl-2-(E)-butenyl 4-diphosphate (HMBPP) into a mixture of isopentenyl diphosphate (IPP) and dimethylallyl diphosphate (DMAPP). Acts in the terminal step of the DOXP/MEP pathway for isoprenoid precursor biosynthesis. The chain is 4-hydroxy-3-methylbut-2-enyl diphosphate reductase from Treponema pallidum (strain Nichols).